Consider the following 239-residue polypeptide: Serine protease SplC (239 aa).

An N-terminal signal peptide occupies residues 1-36 (MNKNIVIKSMAALAILTSATGINAAVVEETQQIANA). Catalysis depends on charge relay system residues histidine 75, aspartate 113, and serine 193.

The protein belongs to the peptidase S1B family.

The protein resides in the secreted. In Staphylococcus aureus (strain MSSA476), this protein is Serine protease SplC (splC).